The following is a 685-amino-acid chain: Polyphosphate kinase (685 aa).

Residue Asn45 participates in ATP binding. Mg(2+) is bound by residues Arg372 and Arg402. Residues 427 to 461 form the PLD phosphodiesterase 1 domain; the sequence is PGLKIHAKLFLISRKEGDDVVRYAHIGTGNFNEKT. The active-site Phosphohistidine intermediate is the His432. 3 residues coordinate ATP: Tyr465, Arg561, and His589. Residues 584–614 enclose the PLD phosphodiesterase 2 domain; the sequence is DRYLEHDRIYIFDNAGDKQVYLSSADWMTRN.

The protein belongs to the polyphosphate kinase 1 (PPK1) family. Mg(2+) serves as cofactor. Post-translationally, an intermediate of this reaction is the autophosphorylated ppk in which a phosphate is covalently linked to a histidine residue through a N-P bond.

The catalysed reaction is [phosphate](n) + ATP = [phosphate](n+1) + ADP. Functionally, catalyzes the reversible transfer of the terminal phosphate of ATP to form a long-chain polyphosphate (polyP). The chain is Polyphosphate kinase from Klebsiella pneumoniae.